Here is a 213-residue protein sequence, read N- to C-terminus: Large ribosomal subunit protein uL3 (213 aa).

The protein belongs to the universal ribosomal protein uL3 family. Part of the 50S ribosomal subunit. Forms a cluster with proteins L14 and L19.

Its function is as follows. One of the primary rRNA binding proteins, it binds directly near the 3'-end of the 23S rRNA, where it nucleates assembly of the 50S subunit. The protein is Large ribosomal subunit protein uL3 of Bifidobacterium longum (strain DJO10A).